A 392-amino-acid polypeptide reads, in one-letter code: Probable tRNA sulfurtransferase (392 aa).

One can recognise a THUMP domain in the interval 59 to 166 (SCYREALKRV…DEGLFIYTTE (108 aa)). ATP-binding positions include 186–187 (LL), 211–212 (YF), R269, G290, and Q299.

Belongs to the ThiI family.

Its subcellular location is the cytoplasm. It carries out the reaction [ThiI sulfur-carrier protein]-S-sulfanyl-L-cysteine + a uridine in tRNA + 2 reduced [2Fe-2S]-[ferredoxin] + ATP + H(+) = [ThiI sulfur-carrier protein]-L-cysteine + a 4-thiouridine in tRNA + 2 oxidized [2Fe-2S]-[ferredoxin] + AMP + diphosphate. It catalyses the reaction [ThiS sulfur-carrier protein]-C-terminal Gly-Gly-AMP + S-sulfanyl-L-cysteinyl-[cysteine desulfurase] + AH2 = [ThiS sulfur-carrier protein]-C-terminal-Gly-aminoethanethioate + L-cysteinyl-[cysteine desulfurase] + A + AMP + 2 H(+). It participates in cofactor biosynthesis; thiamine diphosphate biosynthesis. In terms of biological role, catalyzes the ATP-dependent transfer of a sulfur to tRNA to produce 4-thiouridine in position 8 of tRNAs, which functions as a near-UV photosensor. Also catalyzes the transfer of sulfur to the sulfur carrier protein ThiS, forming ThiS-thiocarboxylate. This is a step in the synthesis of thiazole, in the thiamine biosynthesis pathway. The sulfur is donated as persulfide by IscS. This Coxiella burnetii (strain RSA 493 / Nine Mile phase I) protein is Probable tRNA sulfurtransferase.